The primary structure comprises 426 residues: Squamosa promoter-binding-like protein 10 (426 aa).

Residues 178–255 (PPRCQAEGCK…AEHNRRRRKP (78 aa)) form an SBP-type zinc finger. Zn(2+) is bound by residues C181, C186, C203, H206, C222, C225, H229, and C241. Positions 238-254 (KRSCRKRLAEHNRRRRK) match the Bipartite nuclear localization signal motif. 2 stretches are compositionally biased toward low complexity: residues 268 to 287 (DAAAAPVAAGKKPSGGAATS) and 401 to 417 (SDQNNDNSHNNGGNNNN). Disordered regions lie at residues 268 to 290 (DAAAAPVAAGKKPSGGAATSYTG) and 392 to 426 (PSTATNGEVSDQNNDNSHNNGGNNNNMHLFEVDFM).

In terms of tissue distribution, expressed in stems, leaf sheaths, and young panicles.

The protein localises to the nucleus. In terms of biological role, trans-acting factor that binds specifically to the consensus nucleotide sequence 5'-TNCGTACAA-3'. This chain is Squamosa promoter-binding-like protein 10 (SPL10), found in Oryza sativa subsp. indica (Rice).